The following is a 247-amino-acid chain: ATP synthase subunit a, plastid (247 aa).

Helical transmembrane passes span 33–53 (FLVH…LLGS), 95–115 (VPFI…GALL), 134–154 (INTT…AGIL), 199–219 (LVVV…VMLL), and 220–240 (GLFT…AYIG).

This sequence belongs to the ATPase A chain family. F-type ATPases have 2 components, CF(1) - the catalytic core - and CF(0) - the membrane proton channel. CF(1) has five subunits: alpha(3), beta(3), gamma(1), delta(1), epsilon(1). CF(0) has four main subunits: a, b, b' and c.

The protein resides in the plastid membrane. Its function is as follows. Key component of the proton channel; it plays a direct role in the translocation of protons across the membrane. This chain is ATP synthase subunit a, plastid, found in Cuscuta exaltata (Tall dodder).